The sequence spans 429 residues: Transcriptional adapter 3 (429 aa).

Residues 41-70 (IEELDTLQLELETLLSSASRRLRALEEQRQ) are a coiled coil. Disordered regions lie at residues 86-132 (KLEK…TKVQ), 208-257 (EERR…PFGP), and 274-308 (PMED…HTRS). Composition is skewed to basic and acidic residues over residues 208–221 (EERR…DKKK) and 230–249 (LDAK…HEPP). Residues 364–404 (LLKLAREEMRKQELRQRVRVADNEVMEAFRRIMAARQKKRT) adopt a coiled-coil conformation.

The protein belongs to the NGG1 family.

The protein resides in the nucleus. Functions as a component of the PCAF complex. The PCAF complex is capable of efficiently acetylating histones in a nucleosomal context. This chain is Transcriptional adapter 3 (tada3), found in Danio rerio (Zebrafish).